The following is a 236-amino-acid chain: MAATNIDVCAVVPAAGYGRRMQTECPKQYLSIGNKTILEHSVHALLAHPRVTRVIIVISPGDSRFAQLPLANHPQITVVDGGEERADSVLAGIKAVGDAEWVLVHDAARPCLHQDDLARLLTLSETSRTGGILAAPVRDTMKRAEPGKNAIAHTVDRSGLWHALTPQFFPRELLHDCLTRALNEGATITDEASALEYCGFHPQLVEGRADNIKVTRPEDLALAEFYLTRTIHQENT.

This sequence belongs to the IspD/TarI cytidylyltransferase family. IspD subfamily. Homodimer.

It carries out the reaction 2-C-methyl-D-erythritol 4-phosphate + CTP + H(+) = 4-CDP-2-C-methyl-D-erythritol + diphosphate. The protein operates within isoprenoid biosynthesis; isopentenyl diphosphate biosynthesis via DXP pathway; isopentenyl diphosphate from 1-deoxy-D-xylulose 5-phosphate: step 2/6. Its function is as follows. Catalyzes the formation of 4-diphosphocytidyl-2-C-methyl-D-erythritol from CTP and 2-C-methyl-D-erythritol 4-phosphate (MEP). In Escherichia fergusonii (strain ATCC 35469 / DSM 13698 / CCUG 18766 / IAM 14443 / JCM 21226 / LMG 7866 / NBRC 102419 / NCTC 12128 / CDC 0568-73), this protein is 2-C-methyl-D-erythritol 4-phosphate cytidylyltransferase.